Consider the following 408-residue polypeptide: NADH-quinone oxidoreductase subunit D (408 aa).

It belongs to the complex I 49 kDa subunit family. NDH-1 is composed of 14 different subunits. Subunits NuoB, C, D, E, F, and G constitute the peripheral sector of the complex.

The protein localises to the cell inner membrane. It catalyses the reaction a quinone + NADH + 5 H(+)(in) = a quinol + NAD(+) + 4 H(+)(out). NDH-1 shuttles electrons from NADH, via FMN and iron-sulfur (Fe-S) centers, to quinones in the respiratory chain. The immediate electron acceptor for the enzyme in this species is believed to be ubiquinone. Couples the redox reaction to proton translocation (for every two electrons transferred, four hydrogen ions are translocated across the cytoplasmic membrane), and thus conserves the redox energy in a proton gradient. The sequence is that of NADH-quinone oxidoreductase subunit D from Campylobacter jejuni subsp. jejuni serotype O:6 (strain 81116 / NCTC 11828).